A 241-amino-acid polypeptide reads, in one-letter code: Tetraspanin-1 (241 aa).

The Cytoplasmic segment spans residues 1 to 11 (MGCFNFIKVMM). Residues 12–32 (ILFNMLIFLCGAALLAVGIWV) traverse the membrane as a helical segment. At 33–52 (SVDGPSFVKIFGPMSSSAMQ) the chain is on the extracellular side. A helical membrane pass occupies residues 53 to 73 (FVNVGYFLIAAGAVLFALGFL). The Cytoplasmic portion of the chain corresponds to 74–88 (GCYGAQTESKCALMT). Residues 89–109 (FFFILLLIFIAEVAAAVVALV) form a helical membrane-spanning segment. The Extracellular portion of the chain corresponds to 110–211 (YTTLAENFLT…KQLLYDIRTN (102 aa)). Residues Asn141, Asn154, Asn167, Asn180, Asn189, and Asn194 are each glycosylated (N-linked (GlcNAc...) asparagine). The chain crosses the membrane as a helical span at residues 212-232 (AVTVGGVAAGIGGLELAAMIV). At 233–241 (SMYLYCNLE) the chain is on the cytoplasmic side.

It belongs to the tetraspanin (TM4SF) family. As to quaternary structure, interacts with SLC19A2. Interacts with NTRK1/TRKA.

It localises to the lysosome membrane. Structural component of specialized membrane microdomains known as tetraspanin-enriched microdomains (TERMs), which act as platforms for receptor clustering and signaling. Participates thereby in diverse biological functions such as cell signal transduction, adhesion, migration and protein trafficking. Regulates neuronal differentiation in response to NGF by facilitating NGF-mediated activation of NTRK1/TRKA receptor tyrosine kinase and subsequent downstream signaling pathways. Plays a role in the inhibition of TNFalpha-induced apoptosis. Mechanistically, inhibits the NF-kappa-B signaling pathway by blocking phosphorylation of CHUK. Also promotes the stability of the thiamine transporter 1/SLC19A2 in intestinal epithelial cells leading to an increase of thiamine uptake process. This Bos taurus (Bovine) protein is Tetraspanin-1 (TSPAN1).